A 352-amino-acid polypeptide reads, in one-letter code: PhoH-like protein (352 aa).

A disordered region spans residues M1–V21. Residues A9 to Q20 are compositionally biased toward low complexity. G150 to T157 serves as a coordination point for ATP.

It belongs to the PhoH family.

It is found in the cytoplasm. The protein is PhoH-like protein of Mycobacterium bovis (strain ATCC BAA-935 / AF2122/97).